Consider the following 338-residue polypeptide: NADH-quinone oxidoreductase subunit H (338 aa).

8 consecutive transmembrane segments (helical) span residues 22 to 42 (VVQA…MSFI), 96 to 116 (VAMA…ALGV), 121 to 141 (IGLL…LFGG), 161 to 181 (ISYE…AGSF), 193 to 213 (VWFI…GVAV), 249 to 269 (YVNV…GWLA), 277 to 297 (FVPP…MFVL), and 315 to 335 (WKIC…VILM).

Belongs to the complex I subunit 1 family. NDH-1 is composed of 14 different subunits. Subunits NuoA, H, J, K, L, M, N constitute the membrane sector of the complex.

The protein resides in the cell inner membrane. The catalysed reaction is a quinone + NADH + 5 H(+)(in) = a quinol + NAD(+) + 4 H(+)(out). In terms of biological role, NDH-1 shuttles electrons from NADH, via FMN and iron-sulfur (Fe-S) centers, to quinones in the respiratory chain. The immediate electron acceptor for the enzyme in this species is believed to be ubiquinone. Couples the redox reaction to proton translocation (for every two electrons transferred, four hydrogen ions are translocated across the cytoplasmic membrane), and thus conserves the redox energy in a proton gradient. This subunit may bind ubiquinone. The protein is NADH-quinone oxidoreductase subunit H of Acinetobacter baumannii (strain ATCC 17978 / DSM 105126 / CIP 53.77 / LMG 1025 / NCDC KC755 / 5377).